The sequence spans 203 residues: ATP-dependent Clp protease proteolytic subunit (203 aa).

Residue Ser-107 is the Nucleophile of the active site. His-132 is an active-site residue.

This sequence belongs to the peptidase S14 family. As to quaternary structure, fourteen ClpP subunits assemble into 2 heptameric rings which stack back to back to give a disk-like structure with a central cavity, resembling the structure of eukaryotic proteasomes.

The protein localises to the cytoplasm. It carries out the reaction Hydrolysis of proteins to small peptides in the presence of ATP and magnesium. alpha-casein is the usual test substrate. In the absence of ATP, only oligopeptides shorter than five residues are hydrolyzed (such as succinyl-Leu-Tyr-|-NHMec, and Leu-Tyr-Leu-|-Tyr-Trp, in which cleavage of the -Tyr-|-Leu- and -Tyr-|-Trp bonds also occurs).. Functionally, cleaves peptides in various proteins in a process that requires ATP hydrolysis. Has a chymotrypsin-like activity. Plays a major role in the degradation of misfolded proteins. The protein is ATP-dependent Clp protease proteolytic subunit of Shewanella denitrificans (strain OS217 / ATCC BAA-1090 / DSM 15013).